The primary structure comprises 177 residues: Cytoglobin-1 (177 aa).

Residues 16–165 enclose the Globin domain; the sequence is PLTDKERVMI…LCCSIKAVYE (150 aa). Positions 79 and 111 each coordinate heme b.

Belongs to the globin family. Monomeric.

The protein resides in the cytoplasm. It localises to the nucleus. It carries out the reaction Fe(II)-heme b-[protein] + nitric oxide + O2 = Fe(III)-heme b-[protein] + nitrate. The enzyme catalyses Fe(III)-heme b-[protein] + nitric oxide + H2O = Fe(II)-heme b-[protein] + nitrite + 2 H(+). It catalyses the reaction 2 superoxide + 2 H(+) = H2O2 + O2. The catalysed reaction is H2O2 + AH2 = A + 2 H2O. In terms of biological role, probable multifunctional globin with a hexacoordinated heme iron required for the catalysis of various reactions depending on redox condition of the cell as well as oxygen availability. Has a nitric oxide dioxygenase (NOD) activity and is most probably involved in cell-mediated and oxygen-dependent nitric oxide consumption. Under normoxic conditions functions as a nitric oxide dioxygenase (NOD) but under hypoxic conditions the globin may switch its function to that of a nitrite (NO2) reductase (NiR), generating nitric oxide. Could also have peroxidase and superoxide dismutase activities, detoxifying reactive oxygen species and protecting cells against oxidative stress. Also binds dioxygen with low affinity and could function as an oxygen sensor but has probably no function as a respiratory oxygen carrier. In Oryzias latipes (Japanese rice fish), this protein is Cytoglobin-1.